The sequence spans 106 residues: UPF0145 protein azo0572 (106 aa).

Belongs to the UPF0145 family.

In Azoarcus sp. (strain BH72), this protein is UPF0145 protein azo0572.